Reading from the N-terminus, the 825-residue chain is MRISLKWLRELVDFELSPEELAEALTLVGFEVEEIEDRRSWAEGVVLGRILAAEPHPNADKLRVCQVDLGSEQPATIVCGAANARAGLLVPVATPGTHLPAVNLTIAKAEKRGVLSEGMICSLAELGLERASEGIHEFPPDLDLKAHPLGSDARPLLGLDDVVLDLTSTANRADALSMVGIAREVAALTRNPLRLPPVQPLQAKPIPNFNLRIADAKACPAYSGVLIEGVKVGPSPDWLKHRLAAAGMRSINNVVDVTNLILLEWGQPLHAFDWDRLLQVMGKKKPTIEVRFAQAGETLKTLDGQTRTLHPESHLIVAGGQPVALAGVMGGEETEVSSATTSIFLEAALFDPVVTRRSARSQGLRTEASARYERGVNFATLDLARDRAVQLILELAGGSVVGLTTFDQRPPLERTLKLRLSRLIDVLGEEVRPEDVEEILPALGFQLSRCQAVAPEAPPLPATETAGVAGCVWQVSVPPYRLRDVEREIDLIEEFARLYGYDRFSETLPTEPQVGSLSARETLTRQIREVMRGIGLTEVYHISLCPAEEDSSLVKIANPLSPEYSAVRKALLPGLVEAFRFNWDQGNGPLQAFEIGHVFAYAPPSSPEPYQEAEHLGGILGGDLNPNDWRHHSRPMDWFEAKGLLVSALERLGFTSEFRPDPPEAQSPLLHPGRQAGIWIEGSRIGLFGQLHPRLCQEKDLPEEVYGFEVDLDPLLASLEKRGLVQFSPFSPFPASDRDIAFFAPLELSVADIEKVIRQAAGPLLQSVQLFDEYRGQGVPPGQRSLAFRLVYRAPDRTLTDAEVEAAQNQVRAQLEKHFPVTLRS.

In terms of domain architecture, tRNA-binding spans 39–154; it reads RSWAEGVVLG…KAHPLGSDAR (116 aa). One can recognise a B5 domain in the interval 411–506; it reads PLERTLKLRL…RLYGYDRFSE (96 aa). Mg(2+) contacts are provided by Asp484, Asp490, Glu493, and Glu494. The FDX-ACB domain maps to 731–824; that stretch reads SPFPASDRDI…LEKHFPVTLR (94 aa).

It belongs to the phenylalanyl-tRNA synthetase beta subunit family. Type 1 subfamily. Tetramer of two alpha and two beta subunits. It depends on Mg(2+) as a cofactor.

Its subcellular location is the cytoplasm. It catalyses the reaction tRNA(Phe) + L-phenylalanine + ATP = L-phenylalanyl-tRNA(Phe) + AMP + diphosphate + H(+). In Synechococcus sp. (strain JA-3-3Ab) (Cyanobacteria bacterium Yellowstone A-Prime), this protein is Phenylalanine--tRNA ligase beta subunit.